A 586-amino-acid chain; its full sequence is Aspartate--tRNA ligase (586 aa).

E171 serves as a coordination point for L-aspartate. Residues 195–198 (QLFK) are aspartate. An L-aspartate-binding site is contributed by R217. Residues 217–219 (RDE) and Q226 contribute to the ATP site. H448 contacts L-aspartate. E482 is an ATP binding site. Residue R489 coordinates L-aspartate. Residue 534-537 (GLDR) participates in ATP binding.

It belongs to the class-II aminoacyl-tRNA synthetase family. Type 1 subfamily. Homodimer.

It is found in the cytoplasm. The enzyme catalyses tRNA(Asp) + L-aspartate + ATP = L-aspartyl-tRNA(Asp) + AMP + diphosphate. Functionally, catalyzes the attachment of L-aspartate to tRNA(Asp) in a two-step reaction: L-aspartate is first activated by ATP to form Asp-AMP and then transferred to the acceptor end of tRNA(Asp). The chain is Aspartate--tRNA ligase from Buchnera aphidicola subsp. Acyrthosiphon pisum (strain 5A).